The following is a 134-amino-acid chain: Small ribosomal subunit protein uS9c (134 aa).

The protein belongs to the universal ribosomal protein uS9 family.

It localises to the plastid. Its subcellular location is the chloroplast. The polypeptide is Small ribosomal subunit protein uS9c (rps9) (Guillardia theta (Cryptophyte)).